Consider the following 131-residue polypeptide: Profilin-7 (131 aa).

A disulfide bond links cysteine 13 and cysteine 115. The Involved in PIP2 interaction motif lies at 81–97; the sequence is AVIRGKKGSGGITVKKT. Threonine 111 is modified (phosphothreonine).

Belongs to the profilin family. In terms of assembly, occurs in many kinds of cells as a complex with monomeric actin in a 1:1 ratio. Phosphorylated by MAP kinases.

Its subcellular location is the cytoplasm. It is found in the cytoskeleton. Its function is as follows. Binds to actin and affects the structure of the cytoskeleton. At high concentrations, profilin prevents the polymerization of actin, whereas it enhances it at low concentrations. This chain is Profilin-7, found in Zea mays (Maize).